Here is a 424-residue protein sequence, read N- to C-terminus: Ribulose bisphosphate carboxylase (424 aa).

K159 acts as the Proton acceptor in catalysis. K161 is a binding site for substrate. Residues K185, D187, and E188 each coordinate Mg(2+). K185 is modified (N6-carboxylysine). The active-site Proton acceptor is H277. Residues R278, H310, 347–349, and 369–372 contribute to the substrate site; these read SGG and QAGG.

Belongs to the RuBisCO large chain family. Type III subfamily. As to quaternary structure, homodimer or homodecamer. In contrast to form I RuBisCO, the form III RuBisCO is composed solely of large subunits. Mg(2+) is required as a cofactor.

It carries out the reaction 2 (2R)-3-phosphoglycerate + 2 H(+) = D-ribulose 1,5-bisphosphate + CO2 + H2O. The catalysed reaction is D-ribulose 1,5-bisphosphate + O2 = 2-phosphoglycolate + (2R)-3-phosphoglycerate + 2 H(+). Its function is as follows. Catalyzes the addition of molecular CO(2) and H(2)O to ribulose 1,5-bisphosphate (RuBP), generating two molecules of 3-phosphoglycerate (3-PGA). Functions in an archaeal AMP degradation pathway, together with AMP phosphorylase and R15P isomerase. This Pyrococcus abyssi (strain GE5 / Orsay) protein is Ribulose bisphosphate carboxylase.